The sequence spans 488 residues: Glutamate--tRNA ligase (488 aa).

A 'HIGH' region motif is present at residues 8–18; sequence PSPTGPLHIGG. 4 residues coordinate Zn(2+): Cys-105, Cys-107, Cys-132, and His-134. The short motif at 249 to 253 is the 'KMSKS' region element; that stretch reads KMSKR. ATP is bound at residue Lys-252.

Belongs to the class-I aminoacyl-tRNA synthetase family. Glutamate--tRNA ligase type 1 subfamily. As to quaternary structure, monomer. It depends on Zn(2+) as a cofactor.

The protein localises to the cytoplasm. It catalyses the reaction tRNA(Glu) + L-glutamate + ATP = L-glutamyl-tRNA(Glu) + AMP + diphosphate. Its function is as follows. Catalyzes the attachment of glutamate to tRNA(Glu) in a two-step reaction: glutamate is first activated by ATP to form Glu-AMP and then transferred to the acceptor end of tRNA(Glu). The chain is Glutamate--tRNA ligase from Desulfitobacterium hafniense (strain Y51).